The primary structure comprises 620 residues: Translocator protein BipB (620 aa).

The tract at residues 58–95 (QCDAQPAAHDARLDDRPALRAPQERDAPPLGASDTGSR) is disordered. The segment covering 66 to 84 (HDARLDDRPALRAPQERDA) has biased composition (basic and acidic residues). A coiled-coil region spans residues 309 to 339 (EMQAKREAELQKKSDEYQAQVKKAEEMQKTM). The next 3 membrane-spanning stretches (helical) occupy residues 355–375 (FAAAAFTGGASLALAAVGLAL), 401–421 (AILKPLMEMISSLITKALVAC), and 430–450 (LAGAILGAVVTGVALVAAAFV).

Belongs to the SctE/SipB/YopB family.

It localises to the secreted. Its subcellular location is the host membrane. Plays a role in the bacterium-induced formation of multinucleated giant cell (MNGC), which is formed after host cell fusion, as well as in the intercellular spreading of bacteria and in the induction of apoptosis in macrophages. May act in concert with other effector proteins to induce fusion of host cell membranes. In Burkholderia mallei (strain NCTC 10247), this protein is Translocator protein BipB (bipB).